Consider the following 128-residue polypeptide: uncharacterized protein (128 aa).

It is found in the mitochondrion. This is an uncharacterized protein from Saccharomyces cerevisiae (strain ATCC 204508 / S288c) (Baker's yeast).